A 337-amino-acid chain; its full sequence is Dihydroorotate dehydrogenase (quinone) (337 aa).

FMN is bound by residues 58 to 62 (AGLDK) and Thr-82. Position 62 (Lys-62) interacts with substrate. 107–111 (NCMGF) contacts substrate. FMN-binding residues include Asn-137 and Asn-170. Asn-170 is a binding site for substrate. The Nucleophile role is filled by Ser-173. Asn-175 is a binding site for substrate. FMN-binding residues include Lys-215 and Thr-243. 244–245 (NT) contributes to the substrate binding site. Residues Gly-266, Gly-294, and 315 to 316 (YS) contribute to the FMN site.

Belongs to the dihydroorotate dehydrogenase family. Type 2 subfamily. In terms of assembly, monomer. FMN is required as a cofactor.

The protein localises to the cell membrane. It carries out the reaction (S)-dihydroorotate + a quinone = orotate + a quinol. Its pathway is pyrimidine metabolism; UMP biosynthesis via de novo pathway; orotate from (S)-dihydroorotate (quinone route): step 1/1. In terms of biological role, catalyzes the conversion of dihydroorotate to orotate with quinone as electron acceptor. This chain is Dihydroorotate dehydrogenase (quinone), found in Dichelobacter nodosus (strain VCS1703A).